We begin with the raw amino-acid sequence, 130 residues long: Probable 4-amino-4-deoxy-L-arabinose-phosphoundecaprenol flippase subunit ArnF (130 aa).

At M1–G4 the chain is on the cytoplasmic side. Residues W5 to M25 form a helical membrane-spanning segment. Topologically, residues H26 to P44 are periplasmic. Residues L45 to A65 traverse the membrane as a helical segment. Topologically, residues L66–A74 are cytoplasmic. The helical transmembrane segment at Y75 to F95 threads the bilayer. Residues N96–R103 lie on the Periplasmic side of the membrane. Residues L104 to K124 traverse the membrane as a helical segment. At G125–R130 the chain is on the cytoplasmic side.

This sequence belongs to the ArnF family. As to quaternary structure, heterodimer of ArnE and ArnF.

The protein localises to the cell inner membrane. The protein operates within bacterial outer membrane biogenesis; lipopolysaccharide biosynthesis. Its function is as follows. Translocates 4-amino-4-deoxy-L-arabinose-phosphoundecaprenol (alpha-L-Ara4N-phosphoundecaprenol) from the cytoplasmic to the periplasmic side of the inner membrane. This is Probable 4-amino-4-deoxy-L-arabinose-phosphoundecaprenol flippase subunit ArnF from Sodalis glossinidius (strain morsitans).